Consider the following 230-residue polypeptide: uncharacterized protein (230 aa).

This sequence belongs to the transferase hexapeptide repeat family.

This is an uncharacterized protein from Escherichia coli O6:K15:H31 (strain 536 / UPEC).